Here is a 284-residue protein sequence, read N- to C-terminus: MVLMIVSGRSGSGKSVALRALEDMGFYCVDNLPVVLLPDLARTLADRQISAAVSIDVRNIPESPEIFEQAMNNLPGAFSPQLLFLDADRNTLIRRYSDTRRLHPLSSKNLSLESAIDKESDLLEPLRSRADLIVDTSEMSVHELAEMLRTRLLGKRERELTMVFESFGFKHGIPIDADYVFDVRFLPNPHWDPKLRPMTGLDKPVAAFLDRHTEVHNFIYQTRSYLELWLPMLETNNRSYLTVAIGCTGGKHRSVYIAEQLADYFRSRGKNVQSRHRTLEKRKT.

8-15 (GRSGSGKS) is a binding site for ATP. Position 56-59 (56-59 (DVRN)) interacts with GTP. The tract at residues 266–284 (RSRGKNVQSRHRTLEKRKT) is RNA-binding.

The protein belongs to the RapZ-like family. RapZ subfamily. As to quaternary structure, homotrimer.

Functionally, modulates the synthesis of GlmS, by affecting the processing and stability of the regulatory small RNA GlmZ. When glucosamine-6-phosphate (GlcN6P) concentrations are high in the cell, RapZ binds GlmZ and targets it to cleavage by RNase E. Consequently, GlmZ is inactivated and unable to activate GlmS synthesis. Under low GlcN6P concentrations, RapZ is sequestered and inactivated by an other regulatory small RNA, GlmY, preventing GlmZ degradation and leading to synthesis of GlmS. This Salmonella typhi protein is RNase adapter protein RapZ.